The chain runs to 83 residues: MMMRVFIAMFFLLALVEAGWPRLYDKNCKKNILRTYCSNKICGEATKNTNGELQCTMYCRCANGCFRGQYIDWPNQQTNLLFC.

The signal sequence occupies residues 1-18 (MMMRVFIAMFFLLALVEA). Positions 19 to 26 (GWPRLYDK) are excised as a propeptide.

The protein belongs to the conotoxin E superfamily. Contain 4 disulfide bonds. As to expression, expressed by the venom duct.

The protein localises to the secreted. In terms of biological role, probable neurotoxin. The sequence is that of Conotoxin Im22.1 from Conus imperialis (Imperial cone).